We begin with the raw amino-acid sequence, 596 residues long: Cell adhesion molecule CEACAM20 (596 aa).

The N-terminal stretch at 1–30 (MGPADSWGHHWMGILLSASLCTVWSPPAAA) is a signal peptide. Residues 31–450 (QLTLNANPLD…SSLSSGAIAG (420 aa)) lie on the Extracellular side of the membrane. Ig-like C2-type domains are found at residues 58-154 (PQIH…PIFL), 160-246 (PDPV…GTLK), 256-341 (PQVV…LELT), and 346-432 (PDQV…TSVL). Residues cysteine 90 and cysteine 138 are joined by a disulfide bond. Residues asparagine 96 and asparagine 105 are each glycosylated (N-linked (GlcNAc...) asparagine). Cysteine 276 and cysteine 324 are joined by a disulfide. Asparagine 280, asparagine 306, asparagine 317, asparagine 368, and asparagine 415 each carry an N-linked (GlcNAc...) asparagine glycan. Cysteine 375 and cysteine 416 are oxidised to a cystine. The chain crosses the membrane as a helical span at residues 451-471 (IVIGILAVIAVASELGYFLCI). Over 472 to 585 (RNARRPSRKT…SIYEELVNPE (114 aa)) the chain is Cytoplasmic. Disordered regions lie at residues 477-510 (PSRKTTEDPSHETSQPIPKEEHPTEPSSESLSPE) and 527-563 (QPPDLPEETYETKLPSASRRGNSFSPWKPPPKPLMPP). Over residues 501-510 (EPSSESLSPE) the composition is skewed to low complexity. The segment covering 553-562 (WKPPPKPLMP) has biased composition (pro residues). Residues tyrosine 578 and tyrosine 589 each carry the phosphotyrosine modification.

The protein belongs to the immunoglobulin superfamily. CEA family. Interacts (via extracellular domain) with PTPRH (via extracellular domain); the interaction dephosphorylates CEACAM20. Interacts (phosphorylated form) with SYK (via SH2 domains); the interaction further enhances CEACAM20 phosphorylation. Post-translationally, phosphorylated on tyrosine residues by SYK, SRC and FYN in vitro.

The protein localises to the cell projection. It is found in the microvillus membrane. The protein resides in the apical cell membrane. Together with the tyrosine-protein kinase SYK, enhances production of the cytokine CXCL8/IL-8 via the NFKB pathway and may thus have a role in the intestinal immune response. This Homo sapiens (Human) protein is Cell adhesion molecule CEACAM20.